A 196-amino-acid polypeptide reads, in one-letter code: Nucleoid occlusion factor SlmA (196 aa).

Positions 7–68 (SNRREEILQA…GLIEFIEEAL (62 aa)) constitute an HTH tetR-type domain. A DNA-binding region (H-T-H motif) is located at residues 31-50 (TTAKLAQQVGVSEAALYRHF). Residues 65 to 142 (EEALMSRINR…QLRQILRERK (78 aa)) are a coiled coil.

This sequence belongs to the nucleoid occlusion factor SlmA family. Homodimer. Interacts with FtsZ.

Its subcellular location is the cytoplasm. It is found in the nucleoid. Functionally, required for nucleoid occlusion (NO) phenomenon, which prevents Z-ring formation and cell division over the nucleoid. Acts as a DNA-associated cell division inhibitor that binds simultaneously chromosomal DNA and FtsZ, and disrupts the assembly of FtsZ polymers. SlmA-DNA-binding sequences (SBS) are dispersed on non-Ter regions of the chromosome, preventing FtsZ polymerization at these regions. In Vibrio vulnificus (strain CMCP6), this protein is Nucleoid occlusion factor SlmA.